The sequence spans 224 residues: UPF0319 protein VC_1853 (224 aa).

The first 21 residues, 1–21 (MKLNPLILGLLLSFSAGHSLA), serve as a signal peptide directing secretion.

It belongs to the UPF0319 family.

The chain is UPF0319 protein VC_1853 from Vibrio cholerae serotype O1 (strain ATCC 39315 / El Tor Inaba N16961).